A 120-amino-acid polypeptide reads, in one-letter code: Large ribosomal subunit protein uL18 (120 aa).

It belongs to the universal ribosomal protein uL18 family. As to quaternary structure, part of the 50S ribosomal subunit; part of the 5S rRNA/L5/L18 subcomplex. In B.stearothermophilus only 2 proteins, L5 and L18 have been shown to be part of this subcomplex, unlike the case in E.coli and T.thermophilus where L25 (TL5) is also found. In terms of processing, the protein, when overexpressed in E.coli, contains a phosphoserine, which is required for the protein to bind to 5S rRNA. It has been suggested, based solely on amino acid conservation, that this occurs on Ser-57.

Functionally, this is one of the proteins that bind and probably mediate the attachment of the 5S RNA into the large ribosomal subunit, where it forms part of the central protuberance. This is Large ribosomal subunit protein uL18 (rplR) from Geobacillus stearothermophilus (Bacillus stearothermophilus).